Reading from the N-terminus, the 584-residue chain is Cation channel sperm-associated protein 2 (584 aa).

Residues 1–106 are Cytoplasmic-facing; that stretch reads MAHERGHLQL…LWAGWVLDSS (106 aa). The helical transmembrane segment at 107–129 threads the bilayer; that stretch reads IFSNFIISLIFLNTFVLMVEIEL. Topologically, residues 130–138 are extracellular; the sequence is MNSTNTSLW. A helical transmembrane segment spans residues 139-164; sequence PLKLALEVTDWFILLSFIVEILLMWL. At 165-173 the chain is on the cytoplasmic side; it reads ASFFLFWKN. The helical transmembrane segment at 174-198 threads the bilayer; sequence AWSVFDFVVTMLSLLPEFVVLIGVS. At 199-201 the chain is on the extracellular side; the sequence is ADS. The helical transmembrane segment at 202–220 threads the bilayer; sequence VWLQLLRVSRVLRSLKLFA. Topologically, residues 221–237 are cytoplasmic; sequence RFPQIKVILLALVRALK. Residues 238–260 form a helical membrane-spanning segment; sequence SMTFLLMLLLIFFYVFAVAGVYF. Residues 261–279 lie on the Extracellular side of the membrane; the sequence is FKEYSRSTIENLEYNMFFS. Positions 280–292 form an intramembrane region, helical; Pore-forming; sequence DLLNSLVTVFILF. Residues 293–312 are Extracellular-facing; sequence TLDHWYAVLQDVWKVPEASR. Residues 313-339 traverse the membrane as a helical segment; the sequence is VFSSIYVILWLLLGSIIFRNIIVAMMV. Over 340–584 the chain is Cytoplasmic; sequence TNFQNIRNEL…VQALMNFEDK (245 aa). Residues 376–386 show a composition bias toward polar residues; the sequence is SESLRGTSQGK. Disordered regions lie at residues 376–460 and 480–510; these read SESL…KGYT and AGKA…HDEA. Acidic residues-rich tracts occupy residues 390-418 and 426-443; these read DITE…EEKS and EKND…EEKS. 2 stretches are compositionally biased toward basic and acidic residues: residues 444-460 and 483-496; these read DVEK…KGYT and AENE…KEKA.

The protein belongs to the cation channel sperm-associated (TC 1.A.1.19) family. In terms of assembly, component of the CatSper complex or CatSpermasome composed of the core pore-forming members CATSPER1, CATSPER2, CATSPER3 and CATSPER4 as well as auxiliary members CATSPERB, CATSPERG, CATSPERD, CATSPERE, CATSPERZ, C2CD6/CATSPERT, SLCO6C1, TMEM249, TMEM262 and EFCAB9. HSPA1 may be an additional auxiliary complex member. The core complex members CATSPER1, CATSPER2, CATSPER3 and CATSPER4 form a heterotetrameric channel. The auxiliary CATSPERB, CATSPERG, CATSPERD and CATSPERE subunits form a pavilion-like structure over the pore which stabilizes the complex through interactions with CATSPER4, CATSPER3, CATSPER1 and CATSPER2 respectively. SLCO6C1 interacts with CATSPERE and TMEM262/CATSPERH interacts with CATSPERB, further stabilizing the complex. C2CD6/CATSPERT interacts at least with CATSPERD and is required for targeting the CatSper complex in the flagellar membrane. Interacts with Ca(v)3.3/CACNA1I, leading to suppression of T-type calcium channel activity.

The protein localises to the cell projection. It is found in the cilium. Its subcellular location is the flagellum membrane. The catalysed reaction is Ca(2+)(in) = Ca(2+)(out). With respect to regulation, activated by intracellular alkalinization. Its function is as follows. Pore-forming subunit of the CatSper complex, a sperm-specific voltage-gated calcium channel that plays a central role in sperm cell hyperactivation. Controls calcium entry to mediate the hyperactivated motility, a step needed for sperm motility which is essential late in the preparation of sperm for fertilization. The polypeptide is Cation channel sperm-associated protein 2 (Catsper2) (Rattus norvegicus (Rat)).